Reading from the N-terminus, the 324-residue chain is MKPSVILYKALPDDLLQRLQEHFTVHQVANLSPQTVEQNAAIFAEAEGLLGSNENVNAALLEKMPKLRATSTISVGYDNFDVDALTARKILLMHTPTVLTETVADTLMALVLSTARRVVEVAERVKAGEWTASIGPDWYGTDVHHKTLGIVGMGRIGMALAQRAHFGFNMPILYNARRHHKEAEERFNARYCDLDTLLQESDFVCLILPLTDETHHLFGAEQFAKMKSSAIFINAGRGPVVDENALIAALQKGEIHAAGLDVFEQEPLSVDSPLLSMANVVAVPHIGSATHETRYGMAACAVDNLIDALQGKVEKNCVNPHVAD.

Active-site residues include Arg237 and Glu266. His285 serves as the catalytic Proton donor.

The protein belongs to the D-isomer specific 2-hydroxyacid dehydrogenase family. GhrB subfamily. As to quaternary structure, homodimer.

It localises to the cytoplasm. The enzyme catalyses glycolate + NADP(+) = glyoxylate + NADPH + H(+). The catalysed reaction is (R)-glycerate + NAD(+) = 3-hydroxypyruvate + NADH + H(+). It carries out the reaction (R)-glycerate + NADP(+) = 3-hydroxypyruvate + NADPH + H(+). Functionally, catalyzes the NADPH-dependent reduction of glyoxylate and hydroxypyruvate into glycolate and glycerate, respectively. The sequence is that of Glyoxylate/hydroxypyruvate reductase B from Escherichia coli (strain K12 / MC4100 / BW2952).